A 466-amino-acid chain; its full sequence is ATP synthase subunit beta (466 aa).

Position 152–159 (152–159 (GGAGVGKT)) interacts with ATP.

The protein belongs to the ATPase alpha/beta chains family. As to quaternary structure, F-type ATPases have 2 components, CF(1) - the catalytic core - and CF(0) - the membrane proton channel. CF(1) has five subunits: alpha(3), beta(3), gamma(1), delta(1), epsilon(1). CF(0) has three main subunits: a(1), b(2) and c(9-12). The alpha and beta chains form an alternating ring which encloses part of the gamma chain. CF(1) is attached to CF(0) by a central stalk formed by the gamma and epsilon chains, while a peripheral stalk is formed by the delta and b chains.

Its subcellular location is the cell inner membrane. The enzyme catalyses ATP + H2O + 4 H(+)(in) = ADP + phosphate + 5 H(+)(out). Functionally, produces ATP from ADP in the presence of a proton gradient across the membrane. The catalytic sites are hosted primarily by the beta subunits. This chain is ATP synthase subunit beta, found in Sulfurovum sp. (strain NBC37-1).